Reading from the N-terminus, the 238-residue chain is Ribonuclease PH (238 aa).

Phosphate contacts are provided by residues Arg86 and 124–126 (GTR).

This sequence belongs to the RNase PH family. As to quaternary structure, homohexameric ring arranged as a trimer of dimers.

The enzyme catalyses tRNA(n+1) + phosphate = tRNA(n) + a ribonucleoside 5'-diphosphate. Its function is as follows. Phosphorolytic 3'-5' exoribonuclease that plays an important role in tRNA 3'-end maturation. Removes nucleotide residues following the 3'-CCA terminus of tRNAs; can also add nucleotides to the ends of RNA molecules by using nucleoside diphosphates as substrates, but this may not be physiologically important. Probably plays a role in initiation of 16S rRNA degradation (leading to ribosome degradation) during starvation. This Histophilus somni (strain 129Pt) (Haemophilus somnus) protein is Ribonuclease PH.